The sequence spans 351 residues: Holliday junction branch migration complex subunit RuvB (351 aa).

The segment at 1 to 189 is large ATPase domain (RuvB-L); it reads MTAHDADWSD…FGFTAHMDFY (189 aa). Residues L28, R29, G70, K73, T74, S75, 136-138, R179, Y189, and R226 contribute to the ATP site; that span reads EDF. T74 provides a ligand contact to Mg(2+). Residues 190–260 are small ATPAse domain (RuvB-S); it reads EPAELQQVLA…VAKAALAVYD (71 aa). Positions 263 to 351 are head domain (RuvB-H); it reads ELGLDRLDRA…AGLGQPGLFD (89 aa). Positions 318 and 323 each coordinate DNA.

Belongs to the RuvB family. Homohexamer. Forms an RuvA(8)-RuvB(12)-Holliday junction (HJ) complex. HJ DNA is sandwiched between 2 RuvA tetramers; dsDNA enters through RuvA and exits via RuvB. An RuvB hexamer assembles on each DNA strand where it exits the tetramer. Each RuvB hexamer is contacted by two RuvA subunits (via domain III) on 2 adjacent RuvB subunits; this complex drives branch migration. In the full resolvosome a probable DNA-RuvA(4)-RuvB(12)-RuvC(2) complex forms which resolves the HJ.

It is found in the cytoplasm. It catalyses the reaction ATP + H2O = ADP + phosphate + H(+). In terms of biological role, the RuvA-RuvB-RuvC complex processes Holliday junction (HJ) DNA during genetic recombination and DNA repair, while the RuvA-RuvB complex plays an important role in the rescue of blocked DNA replication forks via replication fork reversal (RFR). RuvA specifically binds to HJ cruciform DNA, conferring on it an open structure. The RuvB hexamer acts as an ATP-dependent pump, pulling dsDNA into and through the RuvAB complex. RuvB forms 2 homohexamers on either side of HJ DNA bound by 1 or 2 RuvA tetramers; 4 subunits per hexamer contact DNA at a time. Coordinated motions by a converter formed by DNA-disengaged RuvB subunits stimulates ATP hydrolysis and nucleotide exchange. Immobilization of the converter enables RuvB to convert the ATP-contained energy into a lever motion, pulling 2 nucleotides of DNA out of the RuvA tetramer per ATP hydrolyzed, thus driving DNA branch migration. The RuvB motors rotate together with the DNA substrate, which together with the progressing nucleotide cycle form the mechanistic basis for DNA recombination by continuous HJ branch migration. Branch migration allows RuvC to scan DNA until it finds its consensus sequence, where it cleaves and resolves cruciform DNA. The protein is Holliday junction branch migration complex subunit RuvB of Mycobacterium avium (strain 104).